Reading from the N-terminus, the 87-residue chain is Large ribosomal subunit protein bL27 (87 aa).

The segment at 1–21 (MAHKKAGGSSRNGRDSESKRL) is disordered.

Belongs to the bacterial ribosomal protein bL27 family.

This chain is Large ribosomal subunit protein bL27, found in Burkholderia multivorans (strain ATCC 17616 / 249).